We begin with the raw amino-acid sequence, 568 residues long: MRQTMTFIPTLKEVPADAEVKSHQLLLRAGFIRQTASGIYSYLPLATLMLRKIEAIIREELEAIGAAELLLPALQPAELWQESGRWNDYGPELMRLKDRASRDFALGPTHEEVITALLRDEVKSYKRLPLTLYQIQTKFRDEKRPRFGLLRGREFIMKDAYSFHATSESLDEVYKLMHQAYSNIFTRCGLEFRSVIADSGSIGGNESKEFMALSEIGEDTIAYSDASDYAANTEMAPVLYMEKKSHELEKELEKVATANQKFIADIVEFLEVPIEKTIKSMLYQVDEEVIMVLVRGDHEVNDIKIKNALDATNVELVDPAVPVEILGANFGSLGPIGVPENIRVFADNAVKDIANAVVGANEDGYHYVNVNPNRDFEVTSYFDLRMIQAGDLSPDGQGVIKFAEGIEVGHIFKLGTKYSEAMNATILDENGRAQPIIMGCYGIGVSRILSAIAEQSNDENGLVWDKQISPFDLHLIPVNMKSEEQVAFAESLYDSLQKAGFSVLIDDRAERAGVKFADADLIGLPIRITVGKKAAEGIVEVKIRKTGEMIEVRQDELLNTLPILFGDK.

Belongs to the class-II aminoacyl-tRNA synthetase family. ProS type 1 subfamily. Homodimer.

It localises to the cytoplasm. The enzyme catalyses tRNA(Pro) + L-proline + ATP = L-prolyl-tRNA(Pro) + AMP + diphosphate. Catalyzes the attachment of proline to tRNA(Pro) in a two-step reaction: proline is first activated by ATP to form Pro-AMP and then transferred to the acceptor end of tRNA(Pro). As ProRS can inadvertently accommodate and process non-cognate amino acids such as alanine and cysteine, to avoid such errors it has two additional distinct editing activities against alanine. One activity is designated as 'pretransfer' editing and involves the tRNA(Pro)-independent hydrolysis of activated Ala-AMP. The other activity is designated 'posttransfer' editing and involves deacylation of mischarged Ala-tRNA(Pro). The misacylated Cys-tRNA(Pro) is not edited by ProRS. The sequence is that of Proline--tRNA ligase from Listeria welshimeri serovar 6b (strain ATCC 35897 / DSM 20650 / CCUG 15529 / CIP 8149 / NCTC 11857 / SLCC 5334 / V8).